The primary structure comprises 408 residues: Collagen and calcium-binding EGF domain-containing protein 1 (408 aa).

The N-terminal stretch at 1-35 (MVPPPLPSRGGAAKRQLGKSLGPLLLLLALGHTWT) is a signal peptide. One can recognise an EGF-like; calcium-binding domain in the interval 135–176 (DIDECATSNTTLCAHICINTMGSYHCECREGYILEDDGRTCT). Cystine bridges form between Cys-139–Cys-151, Cys-147–Cys-160, and Cys-162–Cys-175. Asn-143 carries an N-linked (GlcNAc...) asparagine glycan. Asn-183 is a glycosylation site (N-linked (GlcNAc...) asparagine). 2 disordered regions span residues 246-335 (YLPG…GPPG) and 361-408 (HRTH…NFYP). 2 Collagen-like domains span residues 247 to 292 (LPGP…PMGP) and 302 to 335 (GRRG…GPPG). Over residues 272-281 (PGMPGPPGQP) the composition is skewed to pro residues. Low complexity predominate over residues 283 to 294 (PRGSMGPMGPSP). Over residues 325-334 (PGPPGSPGPP) the composition is skewed to pro residues. O-linked (Xyl...) (chondroitin sulfate) serine glycosylation is present at Ser-387. Positions 390–402 (DYSRRTEARDPEA) are enriched in basic and acidic residues.

It belongs to the CCBE1 family.

It is found in the secreted. Its function is as follows. Required for lymphangioblast budding and angiogenic sprouting from venous endothelium during embryogenesis. In Mus musculus (Mouse), this protein is Collagen and calcium-binding EGF domain-containing protein 1 (Ccbe1).